A 248-amino-acid polypeptide reads, in one-letter code: Cutinase cut1 (248 aa).

The N-terminal stretch at 1-17 (MRSLSLFTALLAGQAFA) is a signal peptide. C79 and C153 form a disulfide bridge. S164 (nucleophile) is an active-site residue. The cysteines at positions 212 and 219 are disulfide-linked. D216 is a catalytic residue. Residue H229 is the Proton donor/acceptor of the active site.

The protein belongs to the cutinase family. The 2 disulfide bonds play a critical role in holding the catalytic residues in juxta-position; reduction of the disulfide bridges results in the complete inactivation of the enzyme.

Its subcellular location is the secreted. It carries out the reaction cutin + H2O = cutin monomers.. Its function is as follows. Catalyzes the hydrolysis of complex carboxylic polyesters found in the cell wall of plants. May degrade cutin, a macromolecule that forms the structure of the plant cuticle. May also degrade suberin, a specialized macromolecule found in the cell wall of various plant tissues. The chain is Cutinase cut1 from Trichoderma harzianum (Hypocrea lixii).